The sequence spans 211 residues: Endonuclease V (211 aa).

2 residues coordinate Mg(2+): aspartate 31 and glutamate 95. The tract at residues 182-211 (IYEVKNTPSPNRSRKKRGNRGKDNNNSQGN) is disordered.

This sequence belongs to the endonuclease V family. The cofactor is Mg(2+).

The protein resides in the cytoplasm. The enzyme catalyses Endonucleolytic cleavage at apurinic or apyrimidinic sites to products with a 5'-phosphate.. Its function is as follows. DNA repair enzyme involved in the repair of deaminated bases. Selectively cleaves double-stranded DNA at the second phosphodiester bond 3' to a deoxyinosine leaving behind the intact lesion on the nicked DNA. The sequence is that of Endonuclease V from Pyrococcus horikoshii (strain ATCC 700860 / DSM 12428 / JCM 9974 / NBRC 100139 / OT-3).